Here is a 515-residue protein sequence, read N- to C-terminus: Bifunctional purine biosynthesis protein PurH (515 aa).

One can recognise an MGS-like domain in the interval 1 to 145; sequence MTKRVLISVS…KNHASVTVVV (145 aa).

It belongs to the PurH family.

The catalysed reaction is (6R)-10-formyltetrahydrofolate + 5-amino-1-(5-phospho-beta-D-ribosyl)imidazole-4-carboxamide = 5-formamido-1-(5-phospho-D-ribosyl)imidazole-4-carboxamide + (6S)-5,6,7,8-tetrahydrofolate. The enzyme catalyses IMP + H2O = 5-formamido-1-(5-phospho-D-ribosyl)imidazole-4-carboxamide. Its pathway is purine metabolism; IMP biosynthesis via de novo pathway; 5-formamido-1-(5-phospho-D-ribosyl)imidazole-4-carboxamide from 5-amino-1-(5-phospho-D-ribosyl)imidazole-4-carboxamide (10-formyl THF route): step 1/1. It functions in the pathway purine metabolism; IMP biosynthesis via de novo pathway; IMP from 5-formamido-1-(5-phospho-D-ribosyl)imidazole-4-carboxamide: step 1/1. The polypeptide is Bifunctional purine biosynthesis protein PurH (Streptococcus pneumoniae serotype 2 (strain D39 / NCTC 7466)).